A 124-amino-acid chain; its full sequence is Replication restart protein PriB (124 aa).

Residues 12–112 enclose the SSB domain; the sequence is IDNCLILSGS…VHAEHIEFID (101 aa).

The protein belongs to the PriB family. Homodimer. Interacts with PriA and DnaT. Component of the replication restart primosome. Primosome assembly occurs via a 'hand-off' mechanism. PriA binds to replication forks, subsequently PriB then DnaT bind; DnaT then displaces ssDNA to generate the helicase loading substrate.

Functionally, involved in the restart of stalled replication forks, which reloads the replicative helicase on sites other than the origin of replication; the PriA-PriB pathway is the major replication restart pathway. During primosome assembly it facilitates complex formation between PriA and DnaT on DNA; stabilizes PriA on DNA. Stimulates the DNA unwinding activity of PriA helicase. This Actinobacillus pleuropneumoniae serotype 5b (strain L20) protein is Replication restart protein PriB.